Here is a 788-residue protein sequence, read N- to C-terminus: LPS-assembly protein LptD (788 aa).

The first 23 residues, methionine 1–alanine 23, serve as a signal peptide directing secretion.

This sequence belongs to the LptD family. In terms of assembly, component of the lipopolysaccharide transport and assembly complex. Interacts with LptE and LptA.

The protein resides in the cell outer membrane. Functionally, together with LptE, is involved in the assembly of lipopolysaccharide (LPS) at the surface of the outer membrane. The protein is LPS-assembly protein LptD of Photobacterium profundum (strain SS9).